A 237-amino-acid polypeptide reads, in one-letter code: Sugar fermentation stimulation protein homolog (237 aa).

This sequence belongs to the SfsA family.

The chain is Sugar fermentation stimulation protein homolog from Pseudomonas syringae pv. tomato (strain ATCC BAA-871 / DC3000).